We begin with the raw amino-acid sequence, 468 residues long: Glutamine synthetase (468 aa).

In terms of domain architecture, GS beta-grasp spans 11–96 (HDVKWIDLRF…LVCDIIEPST (86 aa)). Residues 104–468 (PRAIAHRAEE…PLEYELYYSC (365 aa)) form the GS catalytic domain. Mg(2+)-binding residues include E129 and E131. Residue E207 participates in ATP binding. Mg(2+) contacts are provided by E212 and E220. Residues 264-265 (NG) and G265 contribute to the L-glutamate site. H269 contacts Mg(2+). Residues 271–273 (HMS) and S273 each bind ATP. L-glutamate is bound by residues R321, E327, and R339. Residues R339, R344, and R352 each contribute to the ATP site. E357 is a Mg(2+) binding site. Residue R359 participates in L-glutamate binding. The residue at position 397 (Y397) is an O-AMP-tyrosine.

It belongs to the glutamine synthetase family. In terms of assembly, oligomer of 12 subunits arranged in the form of two hexagons. It depends on Mg(2+) as a cofactor. Requires Mn(2+) as cofactor.

The enzyme catalyses L-glutamate + NH4(+) + ATP = L-glutamine + ADP + phosphate + H(+). With respect to regulation, when cellular nitrogen levels are high, the C-terminal adenylyl transferase (AT) of GlnE inhibits GlnA by covalent transfer of an adenylyl group from ATP to Tyr-397. Conversely, when nitrogen levels are low, the N-terminal adenylyl removase (AR) of GlnE activates GlnA by removing the adenylyl group by phosphorolysis. The fully adenylated enzyme complex is inactive. Its function is as follows. Catalyzes the formation of glutamine from glutamate and ammonia. In vitro, can also use hydroxylamine, methylamine and ethylamine, with 32%, 7% and 1% activity compared to ammonia, respectively. This Pseudomonas taetrolens protein is Glutamine synthetase.